Here is a 960-residue protein sequence, read N- to C-terminus: Phosphoenolpyruvate carboxylase 3 (960 aa).

Ser-8 is subject to Phosphoserine. Active-site residues include His-167 and Lys-597.

It belongs to the PEPCase type 1 family. Homotetramer. The cofactor is Mg(2+).

It is found in the cytoplasm. It catalyses the reaction oxaloacetate + phosphate = phosphoenolpyruvate + hydrogencarbonate. The protein operates within photosynthesis; C4 acid pathway. With respect to regulation, by light-reversible phosphorylation. Through the carboxylation of phosphoenolpyruvate (PEP) it forms oxaloacetate, a four-carbon dicarboxylic acid source for the tricarboxylic acid cycle. This is Phosphoenolpyruvate carboxylase 3 from Sorghum bicolor (Sorghum).